The chain runs to 548 residues: 2-succinyl-5-enolpyruvyl-6-hydroxy-3-cyclohexene-1-carboxylate synthase (548 aa).

The protein belongs to the TPP enzyme family. MenD subfamily. As to quaternary structure, homodimer. It depends on Mg(2+) as a cofactor. Mn(2+) is required as a cofactor. Requires thiamine diphosphate as cofactor.

It catalyses the reaction isochorismate + 2-oxoglutarate + H(+) = 5-enolpyruvoyl-6-hydroxy-2-succinyl-cyclohex-3-ene-1-carboxylate + CO2. It functions in the pathway quinol/quinone metabolism; 1,4-dihydroxy-2-naphthoate biosynthesis; 1,4-dihydroxy-2-naphthoate from chorismate: step 2/7. Its pathway is quinol/quinone metabolism; menaquinone biosynthesis. Catalyzes the thiamine diphosphate-dependent decarboxylation of 2-oxoglutarate and the subsequent addition of the resulting succinic semialdehyde-thiamine pyrophosphate anion to isochorismate to yield 2-succinyl-5-enolpyruvyl-6-hydroxy-3-cyclohexene-1-carboxylate (SEPHCHC). This is 2-succinyl-5-enolpyruvyl-6-hydroxy-3-cyclohexene-1-carboxylate synthase from Mycobacterium ulcerans (strain Agy99).